Consider the following 107-residue polypeptide: Ferredoxin (107 aa).

2 4Fe-4S ferredoxin-type domains span residues 8–37 (ERVVIDQDICISCGACVAACPYQALELDEN) and 38–67 (GKSRLIWEKCKDDFSCVAVCPVKAISKASE). Residues Cys-17, Cys-20, and Cys-23 each contribute to the [4Fe-4S] cluster site. 3 residues coordinate [3Fe-4S] cluster: Cys-27, Cys-47, and Cys-53. Residue Cys-57 coordinates [4Fe-4S] cluster.

Monomer. [4Fe-4S] cluster serves as cofactor. It depends on [3Fe-4S] cluster as a cofactor. Post-translationally, the N-terminus is blocked.

Functionally, ferredoxins are iron-sulfur proteins that transfer electrons in a wide variety of metabolic reactions. The chain is Ferredoxin from Pyrobaculum islandicum (strain DSM 4184 / JCM 9189 / GEO3).